We begin with the raw amino-acid sequence, 147 residues long: Globin (147 aa).

S2 is subject to N-acetylserine. In terms of domain architecture, Globin spans 2–147 (SLSAAEADLA…IIDALKAAGK (146 aa)). H96 contacts heme b.

This sequence belongs to the globin family. As to quaternary structure, monomer.

This Aplysia limacina (Sea hare) protein is Globin.